The chain runs to 306 residues: Small ribosomal subunit protein uS2 (306 aa).

Ser2 is subject to N-acetylserine. Laminin-binding stretches follow at residues 161 to 180 (IPCNNKGAHSVGLMWWMLAR) and 205 to 229 (RDPEEIEKEEQAAAEKATTKEEFQG). [DE]-W-[ST] repeat units follow at residues 230–232 (EWT), 245–247 (DWS), 276–278 (DWS), 286–288 (DWS), and 304–306 (EWS). Positions 242–306 (EVADWSEGVQ…EWTGTTTEWS (65 aa)) are laminin-binding. Residues 247–306 (SEGVQVPSVPIQQFTAERTDVPPAPKPTEDWSTQPASTDDWSAAPTAQASEWTGTTTEWS) form a disordered region. A compositionally biased stretch (polar residues) spans 276 to 306 (DWSTQPASTDDWSAAPTAQASEWTGTTTEWS).

It belongs to the universal ribosomal protein uS2 family. Monomer (37LRP) and homodimer (67LR). Component of the small ribosomal subunit. Mature ribosomes consist of a small (40S) and a large (60S) subunit. The 40S subunit contains about 33 different proteins and 1 molecule of RNA (18S). The 60S subunit contains about 49 different proteins and 3 molecules of RNA (28S, 5.8S and 5S). Interacts with rps21. Interacts with several laminins including at least lamb1. Interacts with mdk. In terms of processing, acylated. Acylation may be a prerequisite for conversion of the monomeric 37 kDa laminin receptor precursor (37LRP) to the mature dimeric 67 kDa laminin receptor (67LR), and may provide a mechanism for membrane association. Cleaved by stromelysin-3 (ST3) at the cell surface. Cleavage by stromelysin-3 may be a mechanism to alter cell-extracellular matrix interactions.

It is found in the cell membrane. The protein resides in the cytoplasm. The protein localises to the nucleus. In terms of biological role, required for the assembly and/or stability of the 40S ribosomal subunit. Required for the processing of the 20S rRNA-precursor to mature 18S rRNA in a late step of the maturation of 40S ribosomal subunits. Also functions as a cell surface receptor for laminin. Plays a role in cell adhesion to the basement membrane and in the consequent activation of signaling transduction pathways. May play a role in cell fate determination and tissue morphogenesis. This chain is Small ribosomal subunit protein uS2 (rpsa), found in Xenopus laevis (African clawed frog).